Reading from the N-terminus, the 507-residue chain is Maturase K (507 aa).

It belongs to the intron maturase 2 family. MatK subfamily.

It localises to the plastid. Its subcellular location is the chloroplast. Usually encoded in the trnK tRNA gene intron. Probably assists in splicing its own and other chloroplast group II introns. This Fagopyrum esculentum (Common buckwheat) protein is Maturase K.